Reading from the N-terminus, the 418-residue chain is Queuine tRNA-ribosyltransferase accessory subunit 2 (418 aa).

Residues Cys325, Cys327, Cys330, and His356 each coordinate Zn(2+).

The protein belongs to the queuine tRNA-ribosyltransferase family. QTRT2 subfamily. Heterodimer of a catalytic subunit and an accessory subunit. Requires Zn(2+) as cofactor.

The protein localises to the cytoplasm. Functionally, non-catalytic subunit of the queuine tRNA-ribosyltransferase (TGT) that catalyzes the base-exchange of a guanine (G) residue with queuine (Q) at position 34 (anticodon wobble position) in tRNAs with GU(N) anticodons (tRNA-Asp, -Asn, -His and -Tyr), resulting in the hypermodified nucleoside queuosine (7-(((4,5-cis-dihydroxy-2-cyclopenten-1-yl)amino)methyl)-7-deazaguanosine). The polypeptide is Queuine tRNA-ribosyltransferase accessory subunit 2 (Drosophila erecta (Fruit fly)).